A 431-amino-acid chain; its full sequence is Serine--tRNA ligase (431 aa).

The segment at Gln41–Glu66 is disordered. Residue Thr240–Glu242 coordinates L-serine. Residue Arg271–Glu273 coordinates ATP. L-serine is bound at residue Glu294. Glu358–Ser361 provides a ligand contact to ATP. Ser392 is a binding site for L-serine.

Belongs to the class-II aminoacyl-tRNA synthetase family. Type-1 seryl-tRNA synthetase subfamily. In terms of assembly, homodimer. The tRNA molecule binds across the dimer.

It is found in the cytoplasm. It catalyses the reaction tRNA(Ser) + L-serine + ATP = L-seryl-tRNA(Ser) + AMP + diphosphate + H(+). The catalysed reaction is tRNA(Sec) + L-serine + ATP = L-seryl-tRNA(Sec) + AMP + diphosphate + H(+). It participates in aminoacyl-tRNA biosynthesis; selenocysteinyl-tRNA(Sec) biosynthesis; L-seryl-tRNA(Sec) from L-serine and tRNA(Sec): step 1/1. Its function is as follows. Catalyzes the attachment of serine to tRNA(Ser). Is also able to aminoacylate tRNA(Sec) with serine, to form the misacylated tRNA L-seryl-tRNA(Sec), which will be further converted into selenocysteinyl-tRNA(Sec). This Aeromonas hydrophila subsp. hydrophila (strain ATCC 7966 / DSM 30187 / BCRC 13018 / CCUG 14551 / JCM 1027 / KCTC 2358 / NCIMB 9240 / NCTC 8049) protein is Serine--tRNA ligase.